The primary structure comprises 345 residues: UbiA prenyltransferase domain-containing protein 1 (345 aa).

Helical transmembrane passes span 60-80 (LALRPWSFSASLIPVALGTAI), 90-110 (LLLFVVCAVAVLAVHGAGNLV), 141-161 (VRFGVFLYTLGCLCAACLYFI), 169-189 (LALIYFGGLSSSFLYTGGIGF), 213-233 (AVQVGYLAVTPLLYAVPLALS), 251-273 (QAGIVTLAILVGPMFSYMLYNLL), 285-305 (ATRYTISMALPLLTIPLAFSL), and 324-344 (LNLLVGLFYVFGIVLAPAGSL).

The protein belongs to the UbiA prenyltransferase family.

It localises to the endoplasmic reticulum membrane. It is found in the golgi apparatus membrane. The protein resides in the mitochondrion membrane. It carries out the reaction menadiol + (2E,6E,10E)-geranylgeranyl diphosphate = menaquinol-4 + diphosphate. The enzyme catalyses all-trans-decaprenyl diphosphate + 4-hydroxybenzoate = 4-hydroxy-3-(all-trans-decaprenyl)benzoate + diphosphate. Its pathway is quinol/quinone metabolism; menaquinone biosynthesis. The protein operates within cofactor biosynthesis; ubiquinone biosynthesis. Functionally, prenyltransferase that mediates the formation of menaquinone-4 (MK-4) and coenzyme Q10. MK-4 is a vitamin K2 isoform required for endothelial cell development. Mediates the conversion of phylloquinone (PK) into MK-4, probably by cleaving the side chain of phylloquinone (PK) to release 2-methyl-1,4-naphthoquinone (menadione; K3) and then prenylating it with geranylgeranyl pyrophosphate (GGPP) to form MK-4. Also plays a role in cardiovascular development independently of MK-4 biosynthesis, by acting as a coenzyme Q10 biosynthetic enzyme: coenzyme Q10, also named ubiquinone, plays an important antioxidant role in the cardiovascular system. Mediates biosynthesis of coenzyme Q10 in the Golgi membrane, leading to protect cardiovascular tissues from NOS3/eNOS-dependent oxidative stress. This is UbiA prenyltransferase domain-containing protein 1 (ubiad1) from Xenopus tropicalis (Western clawed frog).